Here is a 701-residue protein sequence, read N- to C-terminus: Potassium-transporting ATPase ATP-binding subunit (701 aa).

Residues 1–28 (MNPDAPTPKNKSSRSRPSDRPQARKKAK) are disordered. The next 4 membrane-spanning stretches (helical) occupy residues 57 to 77 (MFLV…PNLF), 90 to 110 (GILT…EAVA), 245 to 265 (VLLA…PVFA), and 276 to 296 (ILVA…LSAI). Asp329 functions as the 4-aspartylphosphate intermediate in the catalytic mechanism. Residues Asp366, Glu370, 397–404 (FSAKTRMS), and Lys416 contribute to the ATP site. Asp539 and Asp543 together coordinate Mg(2+). The next 3 helical transmembrane spans lie at 599 to 619 (FSLA…FASA), 635 to 655 (AVLS…PLAL), and 681 to 701 (VIAP…VGLA).

It belongs to the cation transport ATPase (P-type) (TC 3.A.3) family. Type IA subfamily. In terms of assembly, the system is composed of three essential subunits: KdpA, KdpB and KdpC.

The protein resides in the cell membrane. The catalysed reaction is K(+)(out) + ATP + H2O = K(+)(in) + ADP + phosphate + H(+). Part of the high-affinity ATP-driven potassium transport (or Kdp) system, which catalyzes the hydrolysis of ATP coupled with the electrogenic transport of potassium into the cytoplasm. This subunit is responsible for energy coupling to the transport system and for the release of the potassium ions to the cytoplasm. The chain is Potassium-transporting ATPase ATP-binding subunit from Anabaena sp. (strain L31).